A 361-amino-acid polypeptide reads, in one-letter code: Ribosomal RNA small subunit methyltransferase H (361 aa).

S-adenosyl-L-methionine is bound by residues 54 to 56 (GGH), Asp-74, Tyr-101, Asp-122, and Gln-129. Residues 318 to 361 (ARNSRASSAKLRAAQRLAEGQAPRPRRRNKYAPEGRDEPEGGAA) form a disordered region. Positions 348-361 (YAPEGRDEPEGGAA) are enriched in basic and acidic residues.

Belongs to the methyltransferase superfamily. RsmH family.

It localises to the cytoplasm. It catalyses the reaction cytidine(1402) in 16S rRNA + S-adenosyl-L-methionine = N(4)-methylcytidine(1402) in 16S rRNA + S-adenosyl-L-homocysteine + H(+). In terms of biological role, specifically methylates the N4 position of cytidine in position 1402 (C1402) of 16S rRNA. The protein is Ribosomal RNA small subunit methyltransferase H of Nitratidesulfovibrio vulgaris (strain DSM 19637 / Miyazaki F) (Desulfovibrio vulgaris).